We begin with the raw amino-acid sequence, 155 residues long: Small ribosomal subunit protein uS7c (155 aa).

This sequence belongs to the universal ribosomal protein uS7 family. Part of the 30S ribosomal subunit.

The protein resides in the plastid. The protein localises to the chloroplast. Functionally, one of the primary rRNA binding proteins, it binds directly to 16S rRNA where it nucleates assembly of the head domain of the 30S subunit. This Hydrastis canadensis (Goldenseal) protein is Small ribosomal subunit protein uS7c (rps7).